A 290-amino-acid chain; its full sequence is 33 kDa chaperonin (290 aa).

Intrachain disulfides connect Cys235–Cys237 and Cys268–Cys271.

The protein belongs to the HSP33 family. In terms of processing, under oxidizing conditions two disulfide bonds are formed involving the reactive cysteines. Under reducing conditions zinc is bound to the reactive cysteines and the protein is inactive.

Its subcellular location is the cytoplasm. Its function is as follows. Redox regulated molecular chaperone. Protects both thermally unfolding and oxidatively damaged proteins from irreversible aggregation. Plays an important role in the bacterial defense system toward oxidative stress. The chain is 33 kDa chaperonin from Streptococcus equi subsp. equi (strain 4047).